A 258-amino-acid polypeptide reads, in one-letter code: Shikimate dehydrogenase (NADP(+)) (258 aa).

Shikimate is bound by residues 14 to 16 (SES) and Thr61. Residue Lys65 is the Proton acceptor of the active site. Residues Asn86 and Asp101 each coordinate shikimate. Residues 125 to 129 (GSGGS) and Leu211 contribute to the NADP(+) site. Position 213 (Tyr213) interacts with shikimate. Position 234 (Gly234) interacts with NADP(+).

The protein belongs to the shikimate dehydrogenase family. In terms of assembly, homodimer.

The enzyme catalyses shikimate + NADP(+) = 3-dehydroshikimate + NADPH + H(+). Its pathway is metabolic intermediate biosynthesis; chorismate biosynthesis; chorismate from D-erythrose 4-phosphate and phosphoenolpyruvate: step 4/7. In terms of biological role, involved in the biosynthesis of the chorismate, which leads to the biosynthesis of aromatic amino acids. Catalyzes the reversible NADPH linked reduction of 3-dehydroshikimate (DHSA) to yield shikimate (SA). This Clostridium botulinum (strain 657 / Type Ba4) protein is Shikimate dehydrogenase (NADP(+)).